A 404-amino-acid chain; its full sequence is Phosphoglycerate kinase (404 aa).

Substrate-binding positions include 22 to 24 (DLN), Arg-37, 60 to 63 (HLGR), Arg-119, and Arg-156. Residues Lys-206, Gly-302, Glu-333, and 359 to 362 (GGDS) contribute to the ATP site.

The protein belongs to the phosphoglycerate kinase family. As to quaternary structure, monomer.

It is found in the cytoplasm. It carries out the reaction (2R)-3-phosphoglycerate + ATP = (2R)-3-phospho-glyceroyl phosphate + ADP. The protein operates within carbohydrate degradation; glycolysis; pyruvate from D-glyceraldehyde 3-phosphate: step 2/5. The chain is Phosphoglycerate kinase from Clavibacter sepedonicus (Clavibacter michiganensis subsp. sepedonicus).